The sequence spans 513 residues: Na(+)/H(+) antiporter NhaB (513 aa).

Helical transmembrane passes span 23-43, 52-72, 97-117, 120-140, 144-164, 202-222, 238-258, 303-323, 348-368, 391-411, 447-467, and 475-495; these read LALI…PFVA, IFTL…LLAI, LLLM…LFIF, LLLS…AAAF, FLDA…FYGI, LMMH…VGEP, FFLR…LTCL, AIIG…VGLI, TESL…AVII, LFYI…VGTI, ATPN…APLI, and VWMA…CVEF.

This sequence belongs to the NhaB Na(+)/H(+) (TC 2.A.34) antiporter family.

It localises to the cell inner membrane. It carries out the reaction 2 Na(+)(in) + 3 H(+)(out) = 2 Na(+)(out) + 3 H(+)(in). Na(+)/H(+) antiporter that extrudes sodium in exchange for external protons. This chain is Na(+)/H(+) antiporter NhaB, found in Shigella sonnei (strain Ss046).